Reading from the N-terminus, the 750-residue chain is Photosystem I P700 chlorophyll a apoprotein A1 (750 aa).

8 helical membrane passes run 70 to 93 (IFSA…FHGA), 156 to 179 (LYCT…FHYH), 195 to 219 (LNHH…HVSL), 291 to 309 (IAHH…GHMY), 346 to 369 (WHAQ…HHMY), 385 to 411 (LSLF…IFMV), 433 to 455 (AIIS…LYIH), and 531 to 549 (FLVH…LILL). The [4Fe-4S] cluster site is built by cysteine 573 and cysteine 582. The next 2 helical transmembrane spans lie at 589–610 (HVFL…HFSW) and 664–686 (LSAY…MFLF). Position 675 (histidine 675) interacts with chlorophyll a'. Residues methionine 683 and tyrosine 691 each contribute to the chlorophyll a site. Tryptophan 692 is a binding site for phylloquinone. The chain crosses the membrane as a helical span at residues 724–744 (AVGVTHYLLGGIATTWAFFLA).

The protein belongs to the PsaA/PsaB family. In terms of assembly, the PsaA/B heterodimer binds the P700 chlorophyll special pair and subsequent electron acceptors. PSI consists of a core antenna complex that captures photons, and an electron transfer chain that converts photonic excitation into a charge separation. The eukaryotic PSI reaction center is composed of at least 11 subunits. P700 is a chlorophyll a/chlorophyll a' dimer, A0 is one or more chlorophyll a, A1 is one or both phylloquinones and FX is a shared 4Fe-4S iron-sulfur center. serves as cofactor.

Its subcellular location is the plastid. It localises to the chloroplast thylakoid membrane. It carries out the reaction reduced [plastocyanin] + hnu + oxidized [2Fe-2S]-[ferredoxin] = oxidized [plastocyanin] + reduced [2Fe-2S]-[ferredoxin]. Functionally, psaA and PsaB bind P700, the primary electron donor of photosystem I (PSI), as well as the electron acceptors A0, A1 and FX. PSI is a plastocyanin-ferredoxin oxidoreductase, converting photonic excitation into a charge separation, which transfers an electron from the donor P700 chlorophyll pair to the spectroscopically characterized acceptors A0, A1, FX, FA and FB in turn. Oxidized P700 is reduced on the lumenal side of the thylakoid membrane by plastocyanin. The sequence is that of Photosystem I P700 chlorophyll a apoprotein A1 from Nandina domestica (Heavenly bamboo).